Reading from the N-terminus, the 820-residue chain is Serine/threonine-protein phosphatase 4 regulatory subunit 3 (820 aa).

In terms of domain architecture, WH1 spans 1–100 (MSDTRRRVKV…DEIWEKICQV (100 aa)). Disordered regions lie at residues 687–711 (EDEE…DFPE) and 750–820 (AANG…RLGS). Positions 701–711 (EKTKTEDDFPE) are enriched in basic and acidic residues. A compositionally biased stretch (polar residues) spans 750-761 (AANGANSTNSKS). A compositionally biased stretch (low complexity) spans 770 to 784 (SSNGSSSKNTSLTTT). The segment covering 798-809 (YPDDEDEEEEED) has biased composition (acidic residues).

Belongs to the SMEK family. In terms of assembly, serine/threonine-protein phosphatase 4 (PP4) occurs in different assemblies of the catalytic and one or more regulatory subunits.

Regulatory subunit of serine/threonine-protein phosphatase 4 (PP4). The chain is Serine/threonine-protein phosphatase 4 regulatory subunit 3 from Xenopus tropicalis (Western clawed frog).